A 72-amino-acid polypeptide reads, in one-letter code: UPF0352 protein Shal_2512 (72 aa).

This sequence belongs to the UPF0352 family.

In Shewanella halifaxensis (strain HAW-EB4), this protein is UPF0352 protein Shal_2512.